The primary structure comprises 180 residues: Ribulose bisphosphate carboxylase small subunit, chloroplastic (180 aa).

The N-terminal 57 residues, 1-57, are a transit peptide targeting the chloroplast; the sequence is MASVVASAAVVTPFAASAASTTKSSQIVSVQAGLKAGVFGGKSEWQTKTQTNGSRVS.

The protein belongs to the RuBisCO small chain family. Heterohexadecamer of 8 large and 8 small subunits.

It is found in the plastid. Its subcellular location is the chloroplast. RuBisCO catalyzes two reactions: the carboxylation of D-ribulose 1,5-bisphosphate, the primary event in carbon dioxide fixation, as well as the oxidative fragmentation of the pentose substrate. Both reactions occur simultaneously and in competition at the same active site. Although the small subunit is not catalytic it is essential for maximal activity. The chain is Ribulose bisphosphate carboxylase small subunit, chloroplastic from Marchantia paleacea (Liverwort).